A 431-amino-acid chain; its full sequence is Adenylosuccinate synthetase (431 aa).

Residues 13-19 and 41-43 contribute to the GTP site; these read GDEGKGK and GHT. D14 (proton acceptor) is an active-site residue. Residues D14 and G41 each contribute to the Mg(2+) site. Residues 14–17, 39–42, T130, R144, Q225, T240, and R304 each bind IMP; these read DEGK and NAGH. H42 functions as the Proton donor in the catalytic mechanism. 300–306 contributes to the substrate binding site; sequence ATTGRKR. GTP contacts are provided by residues R306, 332 to 334, and 415 to 417; these read KLD and STG.

It belongs to the adenylosuccinate synthetase family. As to quaternary structure, homodimer. The cofactor is Mg(2+).

It localises to the cytoplasm. It catalyses the reaction IMP + L-aspartate + GTP = N(6)-(1,2-dicarboxyethyl)-AMP + GDP + phosphate + 2 H(+). Its pathway is purine metabolism; AMP biosynthesis via de novo pathway; AMP from IMP: step 1/2. Plays an important role in the de novo pathway of purine nucleotide biosynthesis. Catalyzes the first committed step in the biosynthesis of AMP from IMP. In Shewanella denitrificans (strain OS217 / ATCC BAA-1090 / DSM 15013), this protein is Adenylosuccinate synthetase.